Reading from the N-terminus, the 366-residue chain is Alanine racemase (366 aa).

The active-site Proton acceptor; specific for D-alanine is the Lys-33. At Lys-33 the chain carries N6-(pyridoxal phosphate)lysine. Arg-129 serves as a coordination point for substrate. Catalysis depends on Tyr-253, which acts as the Proton acceptor; specific for L-alanine. Residue Met-301 coordinates substrate.

Belongs to the alanine racemase family. Pyridoxal 5'-phosphate serves as cofactor.

It carries out the reaction L-alanine = D-alanine. It participates in amino-acid biosynthesis; D-alanine biosynthesis; D-alanine from L-alanine: step 1/1. In terms of biological role, catalyzes the interconversion of L-alanine and D-alanine. May also act on other amino acids. This chain is Alanine racemase (alr), found in Xanthomonas axonopodis pv. citri (strain 306).